A 235-amino-acid polypeptide reads, in one-letter code: Uridylate kinase (235 aa).

8-11 (KFSG) is an ATP binding site. Residues 16-21 (GKEGYG) form an involved in allosteric activation by GTP region. Residue glycine 50 coordinates UMP. Residues glycine 51 and arginine 55 each coordinate ATP. UMP contacts are provided by residues aspartate 71 and 132-139 (TGNPYFTT). The ATP site is built by threonine 159, tyrosine 165, and aspartate 168.

It belongs to the UMP kinase family. Homohexamer.

It localises to the cytoplasm. It catalyses the reaction UMP + ATP = UDP + ADP. It functions in the pathway pyrimidine metabolism; CTP biosynthesis via de novo pathway; UDP from UMP (UMPK route): step 1/1. With respect to regulation, allosterically activated by GTP. Inhibited by UTP. Its function is as follows. Catalyzes the reversible phosphorylation of UMP to UDP. This is Uridylate kinase from Sulfurovum sp. (strain NBC37-1).